The following is a 415-amino-acid chain: Stimulator of interferon genes protein (415 aa).

One can recognise a TIR domain in the interval 29-163 (HVYHAFISYC…DIIQAISKPE (135 aa)). Glutamate 104 is an active-site residue. Arginine 256 provides a ligand contact to 2',3'-cGAMP. The interval 387-415 (KSPSSTNMVKSEPNIYREESGKTKSVERG) is disordered. Over residues 401–415 (IYREESGKTKSVERG) the composition is skewed to basic and acidic residues.

The protein in the N-terminal section; belongs to the Toll-like receptor family. This sequence in the C-terminal section; belongs to the TMEM173 family. As to quaternary structure, homodimer.

It carries out the reaction NAD(+) + H2O = ADP-D-ribose + nicotinamide + H(+). Sensor of cytosolic DNA from bacteria and viruses that promotes autophagy. Binds c-di-AMP, 2'3'-cGAMP, 3'3'-cGAMP and to a lesser extent c-di-GMP. Nucleotide binding has not been seen to stimulate NAD(+) hydrolase activity. This Magallana gigas (Pacific oyster) protein is Stimulator of interferon genes protein.